The following is a 236-amino-acid chain: Chorionic somatomammotropin hormone (236 aa).

An N-terminal signal peptide occupies residues 1–36 (MAPASSHREHQWTCNLVRGSRLLLLLVVSNLILCQG). Cystine bridges form between cysteine 44–cysteine 51, cysteine 97–cysteine 212, and cysteine 229–cysteine 234.

It belongs to the somatotropin/prolactin family.

It localises to the secreted. This Ovis aries (Sheep) protein is Chorionic somatomammotropin hormone (CSH).